Reading from the N-terminus, the 194-residue chain is MSLVPMVVEQTNRGERSYDIFSRLLNDRIIVLSDEVNDATASLIVAQMLYLEAQDPDKDIQFYINSPGGSVASGFAIYDTMQYVKCDVSTICMGMAASMGAFLLAAGEKGKRFALPNSEIMIHQPLGGARGQATDIKIHAENILRTRDKLNKILSERTGQPLDKIEKDTERDFFMSADEAKAYGIIDDIMVRRK.

The active-site Nucleophile is Ser98. The active site involves His123.

It belongs to the peptidase S14 family. Fourteen ClpP subunits assemble into 2 heptameric rings which stack back to back to give a disk-like structure with a central cavity, resembling the structure of eukaryotic proteasomes.

Its subcellular location is the cytoplasm. The enzyme catalyses Hydrolysis of proteins to small peptides in the presence of ATP and magnesium. alpha-casein is the usual test substrate. In the absence of ATP, only oligopeptides shorter than five residues are hydrolyzed (such as succinyl-Leu-Tyr-|-NHMec, and Leu-Tyr-Leu-|-Tyr-Trp, in which cleavage of the -Tyr-|-Leu- and -Tyr-|-Trp bonds also occurs).. In terms of biological role, cleaves peptides in various proteins in a process that requires ATP hydrolysis. Has a chymotrypsin-like activity. Plays a major role in the degradation of misfolded proteins. This chain is ATP-dependent Clp protease proteolytic subunit, found in Ruminiclostridium cellulolyticum (strain ATCC 35319 / DSM 5812 / JCM 6584 / H10) (Clostridium cellulolyticum).